The chain runs to 640 residues: Ribonuclease J (640 aa).

Positions 75, 77, 79, 80, 145, and 167 each coordinate Zn(2+). 368–372 (HVSGH) provides a ligand contact to substrate. Histidine 394 is a binding site for Zn(2+). Residues 578–640 (TVSATSATPA…RKRSTTSVSS (63 aa)) form a disordered region. Over residues 598-610 (PEPKVKAKPEKKV) the composition is skewed to basic and acidic residues.

Belongs to the metallo-beta-lactamase superfamily. RNA-metabolizing metallo-beta-lactamase-like family. Bacterial RNase J subfamily. In terms of assembly, homodimer, may be a subunit of the RNA degradosome. Zn(2+) is required as a cofactor.

The protein resides in the cytoplasm. Its function is as follows. An RNase that has 5'-3' exonuclease and possibly endoonuclease activity. Involved in maturation of rRNA and in some organisms also mRNA maturation and/or decay. The protein is Ribonuclease J of Synechocystis sp. (strain ATCC 27184 / PCC 6803 / Kazusa).